The sequence spans 145 residues: 3-dehydroquinate dehydratase (145 aa).

Tyr23 (proton acceptor) is an active-site residue. The substrate site is built by Asn73, His79, and Asp86. The Proton donor role is filled by His99. Substrate contacts are provided by residues 100 to 101 and Arg110; that span reads LS.

It belongs to the type-II 3-dehydroquinase family. Homododecamer.

The catalysed reaction is 3-dehydroquinate = 3-dehydroshikimate + H2O. Its pathway is metabolic intermediate biosynthesis; chorismate biosynthesis; chorismate from D-erythrose 4-phosphate and phosphoenolpyruvate: step 3/7. In terms of biological role, catalyzes a trans-dehydration via an enolate intermediate. In Desulfitobacterium hafniense (strain DSM 10664 / DCB-2), this protein is 3-dehydroquinate dehydratase.